Consider the following 252-residue polypeptide: Ribosome assembly factor mrt4 (252 aa).

It belongs to the universal ribosomal protein uL10 family. As to quaternary structure, associates with the pre-60S ribosomal particle.

The protein localises to the nucleus. It is found in the nucleolus. It localises to the cytoplasm. Functionally, component of the ribosome assembly machinery. Nuclear paralog of the ribosomal protein P0, it binds pre-60S subunits at an early stage of assembly in the nucleolus, and is replaced by P0 in cytoplasmic pre-60S subunits and mature 80S ribosomes. The sequence is that of Ribosome assembly factor mrt4 from Neurospora crassa (strain ATCC 24698 / 74-OR23-1A / CBS 708.71 / DSM 1257 / FGSC 987).